Here is a 692-residue protein sequence, read N- to C-terminus: Elongation factor G (692 aa).

The tr-type G domain occupies 8–283 (KNTRNIGIMA…AVLDYLPSPV (276 aa)). Residues 17 to 24 (AHIDAGKT), 81 to 85 (DTPGH), and 135 to 138 (NKMD) contribute to the GTP site.

Belongs to the TRAFAC class translation factor GTPase superfamily. Classic translation factor GTPase family. EF-G/EF-2 subfamily.

The protein resides in the cytoplasm. Catalyzes the GTP-dependent ribosomal translocation step during translation elongation. During this step, the ribosome changes from the pre-translocational (PRE) to the post-translocational (POST) state as the newly formed A-site-bound peptidyl-tRNA and P-site-bound deacylated tRNA move to the P and E sites, respectively. Catalyzes the coordinated movement of the two tRNA molecules, the mRNA and conformational changes in the ribosome. This is Elongation factor G from Exiguobacterium sibiricum (strain DSM 17290 / CCUG 55495 / CIP 109462 / JCM 13490 / 255-15).